The chain runs to 1125 residues: ATP-dependent DNA helicase Hel308 (1125 aa).

Positions 1-29 (MKVDELPIDERIKRVIKERGIEELYPPQA) match the Q motif motif. Residues glutamine 28 and 46–53 (IPTASGKT) each bind ATP. The Helicase ATP-binding domain occupies 33-197 (KSGVLEGKNL…WLDASLVVSD (165 aa)). The DEAH box signature appears at 145–148 (DEVH). The region spanning 226–440 (NWESLVLDAV…ELKERLESET (215 aa)) is the Helicase C-terminal domain. The DOD-type homing endonuclease domain maps to 500 to 640 (LIGLWIAEGS…LQLLVASLGY (141 aa)).

It belongs to the helicase family. Hel308 subfamily. Monomer. This protein undergoes a protein self splicing that involves a post-translational excision of the intervening region (intein) followed by peptide ligation.

It carries out the reaction Couples ATP hydrolysis with the unwinding of duplex DNA by translocating in the 3'-5' direction.. It catalyses the reaction ATP + H2O = ADP + phosphate + H(+). In terms of biological role, DNA-dependent ATPase and 3'-5' DNA helicase that may be involved in repair of stalled replication forks. This Thermococcus kodakarensis (strain ATCC BAA-918 / JCM 12380 / KOD1) (Pyrococcus kodakaraensis (strain KOD1)) protein is ATP-dependent DNA helicase Hel308.